The sequence spans 560 residues: Dimethylaniline monooxygenase [N-oxide-forming] 4 (560 aa).

FAD is bound by residues 9–13 (GAGVS), glutamate 32, and 40–41 (LW). NADP(+) is bound by residues 60–61 (TN) and 195–198 (TGGD). Residues 510-530 (LSHYLIAWGAPVLLVSLLLIY) traverse the membrane as a helical segment.

The protein belongs to the FMO family. The cofactor is FAD.

It is found in the microsome membrane. The protein resides in the endoplasmic reticulum membrane. It carries out the reaction N,N-dimethylaniline + NADPH + O2 + H(+) = N,N-dimethylaniline N-oxide + NADP(+) + H2O. Its function is as follows. This protein is involved in the oxidative metabolism of a variety of xenobiotics such as drugs and pesticides. In Mus musculus (Mouse), this protein is Dimethylaniline monooxygenase [N-oxide-forming] 4 (Fmo4).